The chain runs to 153 residues: MNVGTAHSEVNPNTRVMNSRGIWLSYVLAIGLLHVVLLSIPFVSVPVVWTLTNLIHNTGMYIFLHTVKGTPFETPDQGKARLLTHWEQMDYGVQFTASRKFLTITPIVLYFLTSFYTKYDQIHFVLNTVSLMSVLIPKLPQLHGVRIFGINKY.

Residues Met1–Met17 are important for ceramide level-sensing. The Cytoplasmic portion of the chain corresponds to Met1 to Gly21. Transmembrane regions (helical) follow at residues Ile22–Phe42 and Val43–Phe63. Residues Leu64–Gln94 are Cytoplasmic-facing. The helical transmembrane segment at Phe95 to Thr117 threads the bilayer. Residues Lys118–Gln121 are Extracellular-facing. A helical membrane pass occupies residues Ile122–Leu142. Position 137 is a hydroxyproline (Pro137). Residues His143 to Tyr153 lie on the Cytoplasmic side of the membrane.

It belongs to the ORM family. In terms of assembly, ceramide-sensitive subunit of the serine palmitoyltransferase (SPT) complex, which is also composed of SPTLC1, SPTLC2/3 and SPTSSA/B. Post-translationally, when hydroxylated at Pro-137, ubiquitinated via 'Lys-48'-linkage, leading to proteasomal degradation. In endothelial cells, ORMDL3 proteasomal degradation is controlled by the sphingosine 1-phosphate receptor signaling pathway.

It localises to the endoplasmic reticulum membrane. Plays an essential role in the homeostatic regulation of sphingolipid de novo biosynthesis by modulating the activity of the serine palmitoyltransferase (SPT) in response to ceramide levels. When complexed to SPT, the binding of ceramides to its N-terminus stabilizes a conformation that block SPT substrate entry, hence preventing SPT catalytic activity. Through this mechanism, maintains ceramide levels at sufficient concentrations for the production of complex sphingolipids, but which prevents the accumulation of ceramides to levels that trigger apoptosis. The polypeptide is ORM1-like protein 3 (ORMDL3) (Ailuropoda melanoleuca (Giant panda)).